A 208-amino-acid chain; its full sequence is CKLF-like MARVEL transmembrane domain-containing protein 4 (208 aa).

A compositionally biased stretch (acidic residues) spans 1–11 (MRGGEELDGFE). The interval 1 to 38 (MRGGEELDGFEGEASSTSMISGASSPYQPTTEPVSQRR) is disordered. Over residues 15-25 (SSTSMISGASS) the composition is skewed to low complexity. In terms of domain architecture, MARVEL spans 49–176 (YLRGALGRLK…STFLAMQKWR (128 aa)). 4 helical membrane-spanning segments follow: residues 59–79 (VAQV…MECS), 85–105 (YFFE…LILF), 123–143 (LVNT…LAAL), and 151–171 (IAAV…TFLA). Position 194 is a phosphoserine (Ser194).

Belongs to the chemokine-like factor family. In terms of assembly, interacts with PD1L1 and CMTM6.

It localises to the membrane. In terms of biological role, acts as a backup for CMTM6 to regulate plasma membrane expression of PD-L1/CD274, an immune inhibitory ligand critical for immune tolerance to self and antitumor immunity. May protect PD-L1/CD274 from being polyubiquitinated and targeted for degradation. The polypeptide is CKLF-like MARVEL transmembrane domain-containing protein 4 (Mus musculus (Mouse)).